A 117-amino-acid chain; its full sequence is Large ribosomal subunit protein uL18 (117 aa).

It belongs to the universal ribosomal protein uL18 family. As to quaternary structure, part of the 50S ribosomal subunit; part of the 5S rRNA/L5/L18/L25 subcomplex. Contacts the 5S and 23S rRNAs.

Its function is as follows. This is one of the proteins that bind and probably mediate the attachment of the 5S RNA into the large ribosomal subunit, where it forms part of the central protuberance. This is Large ribosomal subunit protein uL18 from Actinobacillus pleuropneumoniae serotype 5b (strain L20).